The primary structure comprises 402 residues: Prophage integrase IntZ (402 aa).

The Core-binding (CB) domain maps to 103 to 183; sequence AGFKKVAEDW…RIGEIFKFAV (81 aa). The Tyr recombinase domain occupies 206-381; the sequence is GHNAWIPISE…AYLKQRRAMM (176 aa). Active-site residues include Arg244, Lys271, His332, Arg335, and His359. Catalysis depends on Tyr368, which acts as the O-(3'-phospho-DNA)-tyrosine intermediate.

This sequence belongs to the 'phage' integrase family.

Integrase is necessary for integration of the phage into the host genome by site-specific recombination. In conjunction with excisionase, integrase is also necessary for excision of the prophage from the host genome. This is Prophage integrase IntZ (intZ) from Escherichia coli (strain K12).